Consider the following 287-residue polypeptide: Glutamate racemase (287 aa).

Residues 32 to 33 (DS) and 64 to 65 (YG) each bind substrate. Catalysis depends on cysteine 96, which acts as the Proton donor/acceptor. 97–98 (NT) serves as a coordination point for substrate. Cysteine 208 serves as the catalytic Proton donor/acceptor. Residue 209–210 (TH) participates in substrate binding.

It belongs to the aspartate/glutamate racemases family.

It catalyses the reaction L-glutamate = D-glutamate. It participates in cell wall biogenesis; peptidoglycan biosynthesis. In terms of biological role, provides the (R)-glutamate required for cell wall biosynthesis. The sequence is that of Glutamate racemase from Photorhabdus laumondii subsp. laumondii (strain DSM 15139 / CIP 105565 / TT01) (Photorhabdus luminescens subsp. laumondii).